A 143-amino-acid polypeptide reads, in one-letter code: D-aminoacyl-tRNA deacylase (143 aa).

The Gly-cisPro motif, important for rejection of L-amino acids motif lies at 135-136 (GP).

The protein belongs to the DTD family. As to quaternary structure, homodimer.

It localises to the cytoplasm. It catalyses the reaction glycyl-tRNA(Ala) + H2O = tRNA(Ala) + glycine + H(+). The enzyme catalyses a D-aminoacyl-tRNA + H2O = a tRNA + a D-alpha-amino acid + H(+). An aminoacyl-tRNA editing enzyme that deacylates mischarged D-aminoacyl-tRNAs. Also deacylates mischarged glycyl-tRNA(Ala), protecting cells against glycine mischarging by AlaRS. Acts via tRNA-based rather than protein-based catalysis; rejects L-amino acids rather than detecting D-amino acids in the active site. By recycling D-aminoacyl-tRNA to D-amino acids and free tRNA molecules, this enzyme counteracts the toxicity associated with the formation of D-aminoacyl-tRNA entities in vivo and helps enforce protein L-homochirality. The polypeptide is D-aminoacyl-tRNA deacylase (Mycolicibacterium paratuberculosis (strain ATCC BAA-968 / K-10) (Mycobacterium paratuberculosis)).